The chain runs to 626 residues: Serine/threonine-protein kinase PknH (626 aa).

Topologically, residues 1-403 are cytoplasmic; that stretch reads MSDAQDSRVG…QTPRKTNPWP (403 aa). One can recognise a Protein kinase domain in the interval 16–276; it reads YHLKRLLGRG…DLALAAHEAL (261 aa). ATP contacts are provided by residues 22-30 and K45; that span reads LGRGGMGEV. D139 (proton acceptor) is an active-site residue. T170 is modified (phosphothreonine). Positions 292-396 are disordered; the sequence is QESTLPAPPK…GGPSPWAQTP (105 aa). 2 stretches are compositionally biased toward pro residues: residues 297-308 and 316-342; these read PAPPKPVPPPTM and RQPPAPPVTPPGVQPAPKPSYTPPAQP. The span at 343–355 shows a compositional bias: low complexity; the sequence is GPAGQRPGPTGQP. A helical transmembrane segment spans residues 404-424; it reads LVAGAAAVVLVLVLGAIGIWI. Over 425–626 the chain is Extracellular; that stretch reads AIRPKPVQPP…AKIVDKVNKE (202 aa). Cystine bridges form between C482-C545 and C587-C604.

It belongs to the protein kinase superfamily. Ser/Thr protein kinase family. Requires a divalent metal cation as cofactor. In terms of processing, autophosphorylated on threonine and serine residues. Dephosphorylated by PstP.

It localises to the cell membrane. The enzyme catalyses L-seryl-[protein] + ATP = O-phospho-L-seryl-[protein] + ADP + H(+). It carries out the reaction L-threonyl-[protein] + ATP = O-phospho-L-threonyl-[protein] + ADP + H(+). Functionally, may regulate bacterial growth in response to external signals to facilitate adaptation to the host environment. This is Serine/threonine-protein kinase PknH (pknH) from Mycobacterium tuberculosis (strain CDC 1551 / Oshkosh).